Reading from the N-terminus, the 546-residue chain is Chaperonin GroEL (546 aa).

ATP-binding positions include 30–33 (TLGP), lysine 51, 87–91 (DGTTT), glycine 415, 479–481 (NAA), and aspartate 495.

Belongs to the chaperonin (HSP60) family. As to quaternary structure, forms a cylinder of 14 subunits composed of two heptameric rings stacked back-to-back. Interacts with the co-chaperonin GroES.

The protein resides in the cytoplasm. It carries out the reaction ATP + H2O + a folded polypeptide = ADP + phosphate + an unfolded polypeptide.. Its function is as follows. Together with its co-chaperonin GroES, plays an essential role in assisting protein folding. The GroEL-GroES system forms a nano-cage that allows encapsulation of the non-native substrate proteins and provides a physical environment optimized to promote and accelerate protein folding. In Pseudomonas entomophila (strain L48), this protein is Chaperonin GroEL.